The primary structure comprises 377 residues: Chaperone protein DnaJ (377 aa).

The J domain occupies 5–70; the sequence is DYYQVLGVSR…KKRSAYDQLG (66 aa). The CR-type zinc finger occupies 138–216; the sequence is GVTKIISFKT…CYGEGRYINT (79 aa). Zn(2+) contacts are provided by cysteine 151, cysteine 154, cysteine 168, cysteine 171, cysteine 190, cysteine 193, cysteine 204, and cysteine 207. CXXCXGXG motif repeat units follow at residues 151-158, 168-175, 190-197, and 204-211; these read CEACTGKG, CPTCRGSG, CQTCRGAG, and CTKCYGEG.

Belongs to the DnaJ family. In terms of assembly, homodimer. Zn(2+) serves as cofactor.

It is found in the cytoplasm. Its function is as follows. Participates actively in the response to hyperosmotic and heat shock by preventing the aggregation of stress-denatured proteins and by disaggregating proteins, also in an autonomous, DnaK-independent fashion. Unfolded proteins bind initially to DnaJ; upon interaction with the DnaJ-bound protein, DnaK hydrolyzes its bound ATP, resulting in the formation of a stable complex. GrpE releases ADP from DnaK; ATP binding to DnaK triggers the release of the substrate protein, thus completing the reaction cycle. Several rounds of ATP-dependent interactions between DnaJ, DnaK and GrpE are required for fully efficient folding. Also involved, together with DnaK and GrpE, in the DNA replication of plasmids through activation of initiation proteins. This chain is Chaperone protein DnaJ, found in Orientia tsutsugamushi (strain Ikeda) (Rickettsia tsutsugamushi).